The following is an 88-amino-acid chain: Putative transposase InsN for insertion sequence element IS911B (88 aa).

This sequence belongs to the transposase 8 family.

Its function is as follows. Involved in the transposition of the insertion sequence IS911. The chain is Putative transposase InsN for insertion sequence element IS911B (insN2) from Escherichia coli (strain K12).